The following is a 263-amino-acid chain: Imidazole glycerol phosphate synthase subunit HisF (263 aa).

Active-site residues include D11 and D131.

The protein belongs to the HisA/HisF family. As to quaternary structure, heterodimer of HisH and HisF.

The protein localises to the cytoplasm. It catalyses the reaction 5-[(5-phospho-1-deoxy-D-ribulos-1-ylimino)methylamino]-1-(5-phospho-beta-D-ribosyl)imidazole-4-carboxamide + L-glutamine = D-erythro-1-(imidazol-4-yl)glycerol 3-phosphate + 5-amino-1-(5-phospho-beta-D-ribosyl)imidazole-4-carboxamide + L-glutamate + H(+). It functions in the pathway amino-acid biosynthesis; L-histidine biosynthesis; L-histidine from 5-phospho-alpha-D-ribose 1-diphosphate: step 5/9. Functionally, IGPS catalyzes the conversion of PRFAR and glutamine to IGP, AICAR and glutamate. The HisF subunit catalyzes the cyclization activity that produces IGP and AICAR from PRFAR using the ammonia provided by the HisH subunit. This chain is Imidazole glycerol phosphate synthase subunit HisF, found in Deinococcus geothermalis (strain DSM 11300 / CIP 105573 / AG-3a).